The following is a 153-amino-acid chain: Superoxide dismutase [Cu-Zn] (153 aa).

Asparagine 24 carries N-linked (GlcNAc...) asparagine glycosylation. Residues histidine 47, histidine 49, and histidine 64 each contribute to the Cu cation site. An intrachain disulfide couples cysteine 58 to cysteine 147. Residues histidine 64, histidine 72, histidine 81, and aspartate 84 each coordinate Zn(2+). Histidine 121 provides a ligand contact to Cu cation. Residues 126–137 are compositionally biased toward basic and acidic residues; the sequence is DLGRGGNEESKK. The disordered stretch occupies residues 126–145; the sequence is DLGRGGNEESKKTGNAGPRP. Substrate is bound at residue arginine 144.

Belongs to the Cu-Zn superoxide dismutase family. Homodimer. It depends on Cu cation as a cofactor. Zn(2+) serves as cofactor.

The protein resides in the cytoplasm. It carries out the reaction 2 superoxide + 2 H(+) = H2O2 + O2. In terms of biological role, destroys radicals which are normally produced within the cells and which are toxic to biological systems. This is Superoxide dismutase [Cu-Zn] from Humicola lutea.